Reading from the N-terminus, the 205-residue chain is FMN-dependent NADH:quinone oxidoreductase (205 aa).

Residues Ser10, 16–18, and 96–99 each bind FMN; these read SHS and MYNF.

This sequence belongs to the azoreductase type 1 family. As to quaternary structure, homodimer. The cofactor is FMN.

The enzyme catalyses 2 a quinone + NADH + H(+) = 2 a 1,4-benzosemiquinone + NAD(+). It carries out the reaction N,N-dimethyl-1,4-phenylenediamine + anthranilate + 2 NAD(+) = 2-(4-dimethylaminophenyl)diazenylbenzoate + 2 NADH + 2 H(+). Functionally, quinone reductase that provides resistance to thiol-specific stress caused by electrophilic quinones. Also exhibits azoreductase activity. Catalyzes the reductive cleavage of the azo bond in aromatic azo compounds to the corresponding amines. In Nostoc punctiforme (strain ATCC 29133 / PCC 73102), this protein is FMN-dependent NADH:quinone oxidoreductase.